Reading from the N-terminus, the 114-residue chain is uncharacterized protein (114 aa).

This sequence to M.kandleri MK0008.

This is an uncharacterized protein from Methanocaldococcus jannaschii (strain ATCC 43067 / DSM 2661 / JAL-1 / JCM 10045 / NBRC 100440) (Methanococcus jannaschii).